We begin with the raw amino-acid sequence, 360 residues long: Inward rectifier potassium channel 13 (360 aa).

Residues 1 to 50 (MDGSHCKVIAPLLTERHQRMVTKDGHSTLQMDGAQTGLAYLRDAWGILMD) lie on the Cytoplasmic side of the membrane. Residues 51 to 77 (MRWRWMMLVFSASFVIHWLVFAVLWYI) form a helical membrane-spanning segment. Residues 78 to 105 (LAEMNGDLGLDHDAPPENHTICVKYITS) are Extracellular-facing. Positions 106 to 122 (FTAAFSFSLETQLTIGY) form an intramembrane region, helical; Pore-forming. A Selectivity filter motif is present at residues 119 to 124 (TIGYGT). Over 123–131 (GTMFPSGDC) the chain is Extracellular. The helical transmembrane segment at 132 to 157 (PSAIALLAIQMLLGLMLEAFITGAFV) threads the bilayer. The Cytoplasmic portion of the chain corresponds to 158–360 (AKIARPKNRA…FQISETGLTE (203 aa)). Serine 287 carries the post-translational modification Phosphoserine.

It belongs to the inward rectifier-type potassium channel (TC 1.A.2.1) family. In terms of assembly, homotetramer. Interacts with RAB28; the interaction may facilitate cone outer segments phagocytosis. Phosphorylation at Ser-287 by PKA increases them.

The protein resides in the membrane. It localises to the cell membrane. It catalyses the reaction K(+)(in) = K(+)(out). Inhibited by Ba(2+) and Cs(+), although sensitivity to those inhibitors is much lower than in other Kir channels. Its function is as follows. Inward rectifier potassium channels are characterized by a greater tendency to allow potassium to flow into the cell rather than out of it. Their voltage dependence is regulated by the concentration of extracellular potassium; as external potassium is raised, the voltage range of the channel opening shifts to more positive voltages. The inward rectification is mainly due to the blockage of outward current by internal magnesium. KCNJ13 has a very low single channel conductance, low sensitivity to block by external barium and cesium, and no dependence of its inward rectification properties on the internal blocking particle magnesium. The protein is Inward rectifier potassium channel 13 (KCNJ13) of Bos taurus (Bovine).